The sequence spans 3302 residues: Xin actin-binding repeat-containing protein 2 (3302 aa).

Positions 166–204 (NDSEETLKPSSAMGTSSYTSARQSKETSTSSYSNHSLTS) are disordered. Positions 173-187 (KPSSAMGTSSYTSAR) are enriched in polar residues. Positions 191–204 (ETSTSSYSNHSLTS) are enriched in low complexity. Xin repeat units lie at residues 306–321 (AGVQ…TNDS), 341–356 (GEVQ…QPLD), 381–396 (GDVK…QPID), 418–433 (GDVC…RPLD), 456–471 (GDVK…QQLD), 496–511 (GNVK…QPLY), and 534–549 (GDVR…QPLD). Residue Ser-565 is modified to Phosphoserine. Xin repeat units lie at residues 572–587 (GEVG…QPLE) and 606–621 (IDVS…QPLD). Ser-633 carries the phosphoserine modification. 5 Xin repeats span residues 640–655 (GDVK…LPIE), 677–692 (GDVK…QRLE), 713–728 (GHVK…NNLI), 744–759 (GTVE…TPLY), and 782–797 (GDVR…RPID). Position 813 is a phosphoserine (Ser-813). Xin repeat units lie at residues 820–835 (GNVK…QPLD), 859–874 (GDVK…QPME), 892–907 (GDVR…QPLD), 930–945 (GDVR…ENLD), 965–980 (GDVS…QSLD), 1004–1019 (GNVL…QPID), 1040–1055 (GDVR…FSLD), 1077–1092 (GDVK…QPLY), 1115–1130 (GDVR…KPLD), 1152–1167 (GDVS…QPLD), and 1186–1201 (GNVQ…EGGD). Ser-1210 carries the post-translational modification Phosphoserine. Xin repeat units follow at residues 1217-1232 (GNVK…HSID), 1254-1269 (GDVK…QTLD), and 1289-1304 (SDVK…TPIH). The residue at position 1573 (Ser-1573) is a Phosphoserine. 7 disordered regions span residues 1848 to 1882 (VSAS…VDKT), 1920 to 1939 (AETQ…NPAG), 1957 to 2002 (EKQN…APDK), 2039 to 2296 (YPDC…KPYM), 2311 to 2378 (RQQR…SKAV), 2546 to 2593 (YAAK…ESRV), and 2626 to 2687 (NFQQ…RESQ). The span at 1859–1873 (KTKESENVRESKDDV) shows a compositional bias: basic and acidic residues. Thr-1930 carries the phosphothreonine modification. Ser-1935 is subject to Phosphoserine. Residues 1957-1969 (EKQNSNKDMRKND) are compositionally biased toward basic and acidic residues. 2 stretches are compositionally biased toward pro residues: residues 2051-2062 (LPPPSPPPPPPS) and 2125-2134 (SLPPPPPTAP). Low complexity predominate over residues 2135–2145 (SQPAHLLSSSV). Ser-2158 carries the post-translational modification Phosphoserine. Residues 2158–2167 (SRKETLDSHQ) show a composition bias toward basic and acidic residues. Residues 2181 to 2186 (PPTLPK) form an interacts with NEBL region. Ser-2198, Ser-2211, and Ser-2252 each carry phosphoserine. Residues 2205-2243 (ELERSLSDVEIKTTLSKDQKSSLVAESREHTEAKQEVFR) are compositionally biased toward basic and acidic residues. Polar residues-rich tracts occupy residues 2251-2263 (LSIS…SQTV) and 2282-2292 (SFPSGSEQQSP). Positions 2303–2328 (LMIAEEKYRQQREELEKQRRESSCHS) form a coiled coil. Basic and acidic residues-rich tracts occupy residues 2311–2325 (RQQR…RESS) and 2333–2350 (ETQH…ELQK). Positions 2626 to 2635 (NFQQTQTQTS) are enriched in polar residues. Residues 2636 to 2659 (RIEHKELSQPYSEKKCLRDKDKQQ) show a composition bias toward basic and acidic residues. Residues 2674-2685 (TQKQSSFSSVRE) are compositionally biased toward polar residues. Coiled-coil stretches lie at residues 2696 to 2724 (NILE…SNKS) and 2751 to 2777 (RVAM…EMLV). A disordered region spans residues 2835-2934 (RQVATHSEAA…PSPPRSRSEQ (100 aa)). Composition is skewed to polar residues over residues 2836–2850 (QVAT…NPAK) and 2891–2903 (KSEL…NNSC). The segment covering 2907–2916 (LPRRPMEHTS) has biased composition (basic and acidic residues). A phosphoserine mark is found at Ser-2987 and Ser-3225. The tract at residues 3278-3302 (QGNLHNLSKDGLSNGVPRSRPAEFS) is disordered.

It belongs to the Xin family. Interacts with ACTN2. Interacts with F-actin. Interacts with NEBL (via SH3 domain). Interacts with Kcna5/Kv1.5 and Scn5a/Nav1.5; the interactions are required for normal action potential configuration in the heart.

The protein resides in the cell junction. Functionally, protects actin filaments from depolymerization. Required for correct morphology of cell membranes and maturation of intercalated disks of cardiomyocytes via facilitating localization of XIRP1 and CDH2 to the termini of aligned mature cardiomyocytes. Thereby required for correct postnatal heart development and growth regulation that is crucial for overall heart morphology and diastolic function. Required for normal electrical conduction in the heart including formation of the infranodal ventricular conduction system and normal action potential configuration, as a result of its interaction with the cardiac ion channel components Scn5a/Nav1.5 and Kcna5/Kv1.5. Required for regular actin filament spacing of the paracrystalline array in both inner and outer hair cells of the cochlea, thereby required for maintenance of stereocilia morphology. The sequence is that of Xin actin-binding repeat-containing protein 2 from Rattus norvegicus (Rat).